A 74-amino-acid polypeptide reads, in one-letter code: Kappa-scoloptoxin(03)-Ssm1a (74 aa).

A signal peptide spans 1–23 (MNSSIAILLVMALIMFSLDKSYS). Intrachain disulfides connect Cys-32-Cys-59, Cys-42-Cys-58, and Cys-45-Cys-68.

Belongs to the scoloptoxin-03 family. In terms of tissue distribution, expressed by the venom gland.

It is found in the secreted. In terms of biological role, this toxin inhibits voltage-gated potassium channel currents in DRG neurons (IC(50)=44.2 nM). In vivo, insects injected with this toxin showed signs of neurotoxicity including twitching, paralysis, and body contraction. The polypeptide is Kappa-scoloptoxin(03)-Ssm1a (Scolopendra mutilans (Chinese red-headed centipede)).